The primary structure comprises 119 residues: Large ribosomal subunit protein bL20c (119 aa).

Belongs to the bacterial ribosomal protein bL20 family.

It is found in the plastid. The protein localises to the chloroplast. In terms of biological role, binds directly to 23S ribosomal RNA and is necessary for the in vitro assembly process of the 50S ribosomal subunit. It is not involved in the protein synthesizing functions of that subunit. The protein is Large ribosomal subunit protein bL20c (rpl20) of Oryza sativa (Rice).